Consider the following 84-residue polypeptide: MGFYMLLTVALLLTSFMSVEATPVDQAERSAMKESGLAHRIEPRYASCEAAEADCIHDDCFSEDTYTDVCQESCQYMYDNCMDD.

Residues 1–21 form the signal peptide; sequence MGFYMLLTVALLLTSFMSVEA. The propeptide occupies 22–39; it reads TPVDQAERSAMKESGLAH. 3 cysteine pairs are disulfide-bonded: cysteine 48–cysteine 70, cysteine 55–cysteine 74, and cysteine 60–cysteine 81.

Expressed by the venom duct.

It is found in the secreted. The protein is Turripeptide IX-01 of Gemmula speciosa (Splendid gem-turris).